Reading from the N-terminus, the 126-residue chain is UPF0538 protein C2orf76 homolog (126 aa).

The protein belongs to the UPF0538 family.

This is UPF0538 protein C2orf76 homolog from Bos taurus (Bovine).